The primary structure comprises 209 residues: Protein N-terminal glutamine amidohydrolase (209 aa).

Residues Cys30, His83, and Asp99 contribute to the active site.

Belongs to the NTAQ1 family. As to quaternary structure, monomer. In terms of tissue distribution, widely expressed.

Its subcellular location is the cytoplasm. It localises to the cytosol. The protein resides in the nucleus. The catalysed reaction is N-terminal L-glutaminyl-[protein] + H2O = N-terminal L-glutamyl-[protein] + NH4(+). Its function is as follows. Mediates the side-chain deamidation of N-terminal glutamine residues to glutamate, an important step in N-end rule pathway of protein degradation. Conversion of the resulting N-terminal glutamine to glutamate renders the protein susceptible to arginylation, polyubiquitination and degradation as specified by the N-end rule. Does not act on substrates with internal or C-terminal glutamine and does not act on non-glutamine residues in any position. Does not deaminate acetylated N-terminal glutamine. With the exception of proline, all tested second-position residues on substrate peptides do not greatly influence the activity. In contrast, a proline at position 2, virtually abolishes deamidation of N-terminal glutamine. In Mus musculus (Mouse), this protein is Protein N-terminal glutamine amidohydrolase (Ntaq1).